Here is a 379-residue protein sequence, read N- to C-terminus: Carboxypeptidase Y-deficient protein 8 (379 aa).

Residues 84-107 show a composition bias toward low complexity; the sequence is HGSGNSSSKKVTSSTSSSSSNGSV. The tract at residues 84-108 is disordered; the sequence is HGSGNSSSKKVTSSTSSSSSNGSVD. A Phosphoserine modification is found at S216.

This sequence belongs to the VPS26 family. As to quaternary structure, component of the retromer complex which consists of VPS29, VPS26, VPS35, VPS5 and VPS17. Component of a retromer subcomplex consisting of VPS29, VPS26 and VPS35.

Plays a role in vesicular protein sorting. Required for the endosome-to-Golgi retrieval of the vacuolar protein sorting receptor VPS10. Component of the membrane-associated retromer complex which is essential in endosome-to-Golgi retrograde transport. The VPS29-VPS26-VPS35 subcomplex may be involved in cargo selection. This is Carboxypeptidase Y-deficient protein 8 (PEP8) from Saccharomyces cerevisiae (strain ATCC 204508 / S288c) (Baker's yeast).